Consider the following 180-residue polypeptide: ATP synthase subunit delta (180 aa).

This sequence belongs to the ATPase delta chain family. F-type ATPases have 2 components, F(1) - the catalytic core - and F(0) - the membrane proton channel. F(1) has five subunits: alpha(3), beta(3), gamma(1), delta(1), epsilon(1). F(0) has three main subunits: a(1), b(2) and c(10-14). The alpha and beta chains form an alternating ring which encloses part of the gamma chain. F(1) is attached to F(0) by a central stalk formed by the gamma and epsilon chains, while a peripheral stalk is formed by the delta and b chains.

It localises to the cell inner membrane. In terms of biological role, f(1)F(0) ATP synthase produces ATP from ADP in the presence of a proton or sodium gradient. F-type ATPases consist of two structural domains, F(1) containing the extramembraneous catalytic core and F(0) containing the membrane proton channel, linked together by a central stalk and a peripheral stalk. During catalysis, ATP synthesis in the catalytic domain of F(1) is coupled via a rotary mechanism of the central stalk subunits to proton translocation. Its function is as follows. This protein is part of the stalk that links CF(0) to CF(1). It either transmits conformational changes from CF(0) to CF(1) or is implicated in proton conduction. This is ATP synthase subunit delta from Parabacteroides distasonis (strain ATCC 8503 / DSM 20701 / CIP 104284 / JCM 5825 / NCTC 11152).